Here is a 290-residue protein sequence, read N- to C-terminus: Membrane protein insertase YidC (290 aa).

A signal peptide spans 1 to 19 (MKKKTLLPLFLGIMVFLAG). Residue cysteine 20 is the site of N-palmitoyl cysteine attachment. Cysteine 20 carries S-diacylglycerol cysteine lipidation. Helical transmembrane passes span 56–76 (YGLA…PFML), 134–154 (MLGC…YFVL), 176–196 (PDIW…YVSS), 207–224 (GYMM…ISLS), and 229–251 (LGLY…NIYY). Residues 270-290 (HNGGSNKKGKNTQVVSKKKKK) form a disordered region.

This sequence belongs to the OXA1/ALB3/YidC family. Type 2 subfamily.

It localises to the cell membrane. Functionally, required for the insertion and/or proper folding and/or complex formation of integral membrane proteins into the membrane. Involved in integration of membrane proteins that insert both dependently and independently of the Sec translocase complex, as well as at least some lipoproteins. This is Membrane protein insertase YidC from Staphylococcus aureus (strain MRSA252).